The sequence spans 366 residues: Chorismate synthase (366 aa).

Residue R48 coordinates NADP(+). FMN-binding positions include 131 to 133 (RAS), 243 to 244 (NA), G288, 303 to 307 (KPTSS), and R329.

The protein belongs to the chorismate synthase family. As to quaternary structure, homotetramer. FMNH2 serves as cofactor.

The enzyme catalyses 5-O-(1-carboxyvinyl)-3-phosphoshikimate = chorismate + phosphate. The protein operates within metabolic intermediate biosynthesis; chorismate biosynthesis; chorismate from D-erythrose 4-phosphate and phosphoenolpyruvate: step 7/7. Catalyzes the anti-1,4-elimination of the C-3 phosphate and the C-6 proR hydrogen from 5-enolpyruvylshikimate-3-phosphate (EPSP) to yield chorismate, which is the branch point compound that serves as the starting substrate for the three terminal pathways of aromatic amino acid biosynthesis. This reaction introduces a second double bond into the aromatic ring system. The chain is Chorismate synthase from Bartonella henselae (strain ATCC 49882 / DSM 28221 / CCUG 30454 / Houston 1) (Rochalimaea henselae).